A 168-amino-acid polypeptide reads, in one-letter code: Siroheme decarboxylase NirH subunit (168 aa).

This sequence belongs to the Ahb/Nir family. In terms of assembly, probably forms a complex composed of NirD, NirL, NirG and NirH. All proteins are required for the total conversion of siroheme to didecarboxysiroheme.

The enzyme catalyses siroheme + 2 H(+) = 12,18-didecarboxysiroheme + 2 CO2. It functions in the pathway porphyrin-containing compound metabolism. In terms of biological role, involved in heme d1 biosynthesis. Catalyzes the decarboxylation of siroheme into didecarboxysiroheme. This Stutzerimonas stutzeri (Pseudomonas stutzeri) protein is Siroheme decarboxylase NirH subunit.